The primary structure comprises 269 residues: MSVGIFDSGLGGLTVLDAVQTRLPDMPFAYLADSAHAPYGVRTADDIYDLTCQSVARLFDAGCNLVILACNTASAAALRRMQESWVPEDKRVLGVFVPLIEAMTERQWGDNSPPREVGVKHVALFATPATVASRAFQRELAFRAIGVDVEAQACGGVVDAIEDGDMMLAEALVRSHVEALQRKMPTPDAAILGCTHYPLMQDIFQKALGENVRVFSQANLVADSLADYLERHPGMRGTGSPVFLTTGDPARVSDRATQFLRRRIEFSAA.

Substrate contacts are provided by residues 7 to 8 (DS) and 39 to 40 (YG). The active-site Proton donor/acceptor is cysteine 70. Position 71–72 (71–72 (NT)) interacts with substrate. Cysteine 194 acts as the Proton donor/acceptor in catalysis. 195–196 (TH) contributes to the substrate binding site.

This sequence belongs to the aspartate/glutamate racemases family.

It carries out the reaction L-glutamate = D-glutamate. It participates in cell wall biogenesis; peptidoglycan biosynthesis. Provides the (R)-glutamate required for cell wall biosynthesis. This chain is Glutamate racemase, found in Roseobacter denitrificans (strain ATCC 33942 / OCh 114) (Erythrobacter sp. (strain OCh 114)).